A 369-amino-acid polypeptide reads, in one-letter code: Putative FAD-dependent oxidoreductase LodB (369 aa).

FAD is bound by residues 10–14 (GGGPA) and Arg103.

FAD serves as cofactor.

Its subcellular location is the cytoplasm. Functionally, is required for lysine-epsilon oxidase (LOD) activity in M.mediterranea. May be involved in the generation of the quinonic cofactor of LodA, leading to the active form of LodA containing a tyrosine-derived quinone cofactor. The sequence is that of Putative FAD-dependent oxidoreductase LodB (lodB) from Marinomonas mediterranea (strain ATCC 700492 / JCM 21426 / NBRC 103028 / MMB-1).